Reading from the N-terminus, the 455-residue chain is mRNA cleavage and polyadenylation factor CLP1 (455 aa).

Positions 28 and 67 each coordinate ATP. A disordered region spans residues 112–131 (EAAARNNGGGRSAPHGPRVL). Residue 137 to 142 (GCGRTS) participates in ATP binding.

Belongs to the Clp1 family. Clp1 subfamily. In terms of assembly, component of a pre-mRNA cleavage factor complex. Interacts directly with PCF11.

Its subcellular location is the nucleus. In terms of biological role, required for endonucleolytic cleavage during polyadenylation-dependent pre-mRNA 3'-end formation. The chain is mRNA cleavage and polyadenylation factor CLP1 from Pyricularia oryzae (strain 70-15 / ATCC MYA-4617 / FGSC 8958) (Rice blast fungus).